Consider the following 378-residue polypeptide: Tafazzin (378 aa).

Topologically, residues 1-137 (MFMVVCSNLR…RLRNPSKFWY (137 aa)) are mitochondrial intermembrane. The interval 46-112 (APEARPVPDE…DQDADPSLDV (67 aa)) is disordered. Residues 51 to 67 (PVPDERYPGSQQDRKDI) show a composition bias toward basic and acidic residues. Residues 138-158 (VVSQFVVSAVGIFSKVVLMFL) lie within the membrane without spanning it. The Mitochondrial intermembrane portion of the chain corresponds to 159–378 (NKPRVYNRER…ETEKLHRERN (220 aa)). An HXXXXD motif motif is present at residues 188–193 (HYSCFD).

The protein belongs to the taffazin family. As to quaternary structure, associates with multiple protein complexes. Association with large protein complexes occurs only in the presence of cardiolipin.

The protein localises to the mitochondrion outer membrane. The protein resides in the mitochondrion inner membrane. It localises to the mitochondrion. Its subcellular location is the mitochondrion membrane. It is found in the golgi apparatus membrane. The protein localises to the endoplasmic reticulum membrane. It catalyses the reaction 1'-[1,2-diacyl-sn-glycero-3-phospho],3'-[1-acyl-sn-glycero-3-phospho]-glycerol + a 1,2-diacyl-sn-glycero-3-phosphocholine = a cardiolipin + a 1-acyl-sn-glycero-3-phosphocholine. The catalysed reaction is 1'-[1,2-di-(9Z,12Z-octadecadienoyl)-sn-glycero-3-phospho]-3'-[1-(9Z,12Z-octadecadienoyl)-sn-glycero-3-phospho]-glycerol + 1-hexadecanoyl-2-(9Z,12Z-octadecadienoyl)-sn-glycero-3-phosphocholine = 1',3'-bis-[1,2-di-(9Z,12Z-octadecadienoyl)-sn-glycero-3-phospho]-glycerol + 1-hexadecanoyl-sn-glycero-3-phosphocholine. It carries out the reaction 1'-[1,2-di-(9Z,12Z-octadecadienoyl)-sn-glycero-3-phospho]-3'-[2-(9Z,12Z-octadecadienoyl)-sn-glycero-3-phospho]-glycerol + 1-hexadecanoyl-2-(9Z,12Z-octadecadienoyl)-sn-glycero-3-phosphocholine = 1',3'-bis-[1,2-di-(9Z,12Z-octadecadienoyl)-sn-glycero-3-phospho]-glycerol + 1-hexadecanoyl-sn-glycero-3-phosphocholine. The enzyme catalyses 1,2-di-(9Z,12Z-octadecadienoyl)-sn-glycero-3-phosphocholine + 1'-[1,2-di-(9Z,12Z-octadecadienoyl)-sn-glycero-3-phospho]-3'-[1-(9Z,12Z-octadecadienoyl)-sn-glycero-3-phospho]-glycerol = 1-(9Z,12Z)-octadecadienoyl-sn-glycero-3-phosphocholine + 1',3'-bis-[1,2-di-(9Z,12Z-octadecadienoyl)-sn-glycero-3-phospho]-glycerol. It catalyses the reaction 1-tetradecanoyl-sn-glycero-3-phosphocholine + 1',3'-bis-[1,2-di-(9Z,12Z-octadecadienoyl)-sn-glycero-3-phospho]-glycerol = 1-tetradecanoyl-2-(9Z,12Z-octadecadienoyl)-sn-glycero-3-phosphocholine + 1'-[1,2-di-(9Z,12Z-octadecadienoyl)-sn-glycero-3-phospho]-3'-[1-(9Z,12Z-octadecadienoyl)-sn-glycero-3-phospho]-glycerol. The catalysed reaction is 1',3'-bis[1,2-di-(9Z-octadecenoyl)-sn-glycero-3-phospho]-glycerol + 1-nonadecanoyl-sn-glycero-3-phosphocholine = 1-nonadecanoyl-2-(9Z-octadecenoyl)-sn-glycero-3-phosphocholine + 1'-[1,2-di-(9Z-octadecenoyl)-sn-glycero-3-phospho]-3'-[1-(9Z-octadecenoyl)-sn-glycero-3-phospho]-glycerol. It carries out the reaction a 1,2-diacyl-sn-glycero-3-phospho-(1'-sn-glycerol) + a 1-acyl-sn-glycero-3-phosphocholine = 1-acyl-sn-glycero-3-phospho-(1'-sn-glycerol) + a 1,2-diacyl-sn-glycero-3-phosphocholine. The enzyme catalyses 1-hexadecanoyl-2-(9Z,12Z-octadecadienoyl)-sn-glycero-3-phospho-(1'-sn-glycerol) + 1-hexadecanoyl-sn-glycero-3-phosphocholine = 1-hexadecanoyl-sn-glycero-3-phospho-(1'-sn-glycerol) + 1-hexadecanoyl-2-(9Z,12Z-octadecadienoyl)-sn-glycero-3-phosphocholine. It catalyses the reaction 1,2-di-(9Z-octadecenoyl)-sn-glycero-3-phospho-(1'-sn-glycerol) + 1-nonadecanoyl-sn-glycero-3-phosphocholine = 1-nonadecanoyl-2-(9Z-octadecenoyl)-sn-glycero-3-phosphocholine + 1-(9Z-octadecenoyl)-sn-glycero-3-phospho-(1'-sn-glycerol). The catalysed reaction is a 1,2-diacyl-sn-glycero-3-phosphate + a 1-acyl-sn-glycero-3-phosphocholine = a 1-acyl-sn-glycero-3-phosphate + a 1,2-diacyl-sn-glycero-3-phosphocholine. It carries out the reaction 1-hexadecanoyl-2-(9Z,12Z-octadecadienoyl)-sn-glycero-3-phosphate + 1-hexadecanoyl-sn-glycero-3-phosphocholine = 1-hexadecanoyl-2-(9Z,12Z-octadecadienoyl)-sn-glycero-3-phosphocholine + 1-hexadecanoyl-sn-glycero-3-phosphate. The enzyme catalyses 1-hexadecanoyl-2-(9Z,12Z-octadecadienoyl)-sn-glycero-3-phosphocholine + 1-(9Z-octadecenoyl)-sn-glycero-3-phosphate = 1-(9Z)-octadecenoyl-2-(9Z,12Z)-octadecadienoyl-sn-glycero-3-phosphate + 1-hexadecanoyl-sn-glycero-3-phosphocholine. It catalyses the reaction a 1-acyl-sn-glycero-3-phosphocholine + a 1,2-diacyl-sn-glycero-3-phosphoethanolamine = a 1-acyl-sn-glycero-3-phosphoethanolamine + a 1,2-diacyl-sn-glycero-3-phosphocholine. The catalysed reaction is 1-hexadecanoyl-2-(9Z,12Z-octadecadienoyl)-sn-glycero-3-phosphoethanolamine + 1-hexadecanoyl-sn-glycero-3-phosphocholine = 1-hexadecanoyl-2-(9Z,12Z-octadecadienoyl)-sn-glycero-3-phosphocholine + 1-hexadecanoyl-sn-glycero-3-phosphoethanolamine. It carries out the reaction 1,2-di-(9Z,12Z-octadecadienoyl)-sn-glycero-3-phosphoethanolamine + 1-tetradecanoyl-sn-glycero-3-phosphocholine = 1-(9Z,12Z-octadecadienoyl)-sn-glycero-3-phosphoethanolamine + 1-tetradecanoyl-2-(9Z,12Z-octadecadienoyl)-sn-glycero-3-phosphocholine. The enzyme catalyses 1'-[1,2-diacyl-sn-glycero-3-phospho],3'-[1-acyl-sn-glycero-3-phospho]-glycerol + a 1,2-diacyl-sn-glycero-3-phosphoethanolamine = a cardiolipin + a 1-acyl-sn-glycero-3-phosphoethanolamine. It catalyses the reaction 1-hexadecanoyl-2-(9Z,12Z-octadecadienoyl)-sn-glycero-3-phosphoethanolamine + 1'-[1,2-di-(9Z,12Z-octadecadienoyl)-sn-glycero-3-phospho]-3'-[1-(9Z,12Z-octadecadienoyl)-sn-glycero-3-phospho]-glycerol = 1',3'-bis-[1,2-di-(9Z,12Z-octadecadienoyl)-sn-glycero-3-phospho]-glycerol + 1-hexadecanoyl-sn-glycero-3-phosphoethanolamine. The catalysed reaction is 1'-[1-(9Z,12Z-octadecadienoyl)-2-(9Z-octadecenoyl)-sn-glycero-3-phospho]-3'-[1-(9Z,12Z-octadecadienoyl)-sn-glycero-3-phospho]-glycerol + 1',3'-bis-[1,2-di-(9Z,12Z-octadecadienoyl)-sn-glycero-3-phospho]-glycerol = 1'-[1,2-di-(9Z,12Z-octadecadienoyl)-sn-glycero-3-phospho]-3'-[1-(9Z,12Z-octadecadienoyl)-2-(9Z-octadecenoyl)-sn-glycero-3-phospho]-glycerol + 1'-[1,2-di-(9Z,12Z-octadecadienoyl)-sn-glycero-3-phospho]-3'-[1-(9Z,12Z-octadecadienoyl)-sn-glycero-3-phospho]-glycerol. It carries out the reaction 1,2-di-(9Z-hexadecenoyl)-sn-glycero-3-phosphocholine + 1-hexadecanoyl-sn-glycero-3-phosphocholine = 1-hexadecanoyl-2-(9Z-hexadecenoyl)-sn-glycero-3-phosphocholine + 1-(9Z-hexadecenoyl)-sn-glycero-3-phosphocholine. The enzyme catalyses 1,2-dioctadecanoyl-sn-glycero-3-phosphocholine + 1-hexadecanoyl-sn-glycero-3-phosphocholine = 1-hexadecanoyl-2-octadecanoyl-sn-glycero-3-phosphocholine + 1-octadecanoyl-sn-glycero-3-phosphocholine. It catalyses the reaction 1,2-di-(9Z-octadecenoyl)-sn-glycero-3-phosphocholine + 1-hexadecanoyl-sn-glycero-3-phosphocholine = 1-hexadecanoyl-2-(9Z-octadecenoyl)-sn-glycero-3-phosphocholine + 1-(9Z-octadecenoyl)-sn-glycero-3-phosphocholine. The catalysed reaction is 1,2-di-(9Z,12Z-octadecadienoyl)-sn-glycero-3-phosphocholine + 1-(9Z-octadecenoyl)-sn-glycero-3-phosphocholine = 1-(9Z)-octadecenoyl-2-(9Z,12Z)-octadecadienoyl-sn-glycero-3-phosphocholine + 1-(9Z,12Z)-octadecadienoyl-sn-glycero-3-phosphocholine. It carries out the reaction 1,2-di-(9Z,12Z,15Z-octadecatrienoyl)-sn-glycero-3-phosphocholine + 1-tetradecanoyl-sn-glycero-3-phosphocholine = 1-tetradecanoyl-2-(9Z,12Z,15Z-octadecatrienoyl)-sn-glycero-3-phosphocholine + 1-(9Z,12Z,15Z-octadecatrienoyl)-sn-glycero-3-phosphocholine. The enzyme catalyses 1-nonadecanoyl-sn-glycero-3-phosphocholine + 1-octadecanoyl-2-(9Z-octadecenoyl)-sn-glycero-3-phosphocholine = 1-nonadecanoyl-2-(9Z-octadecenoyl)-sn-glycero-3-phosphocholine + 1-octadecanoyl-sn-glycero-3-phosphocholine. It catalyses the reaction 1-(9Z)-octadecenoyl-2-octadecanoyl-sn-glycero-3-phosphocholine + 1-nonadecanoyl-sn-glycero-3-phosphocholine = 2-octadecanoyl-sn-glycero-3-phosphocholine + 1-nonadecanoyl-2-(9Z-octadecenoyl)-sn-glycero-3-phosphocholine. The protein operates within phospholipid metabolism. In terms of biological role, acyltransferase required to remodel newly synthesized phospholipid cardiolipin (1',3'-bis-[1,2-diacyl-sn-glycero-3-phospho]-glycerol or CL), a key component of the mitochondrial inner membrane, with tissue specific acyl chains necessary for adequate mitochondrial function. Its role in cellular physiology is to improve mitochondrial performance. CL is critical for the coassembly of lipids and proteins in mitochondrial membranes. For instance, remodeling of the acyl groups of CL in the mitochondrial inner membrane affects the assembly and stability of respiratory chain complex IV and its supercomplex forms. Catalyzes the transacylation between phospholipids and lysophospholipids, with the highest rate being between phosphatidylcholine (1,2-diacyl-sn-glycero-3-phosphocholine or PC) and CL. Catalyzes both 1-acyl-sn-glycero-3-phosphocholine (lysophosphatidylcholine or LPC) reacylation and PC-CL transacylation, that means, it exchanges acyl groups between CL and PC by a combination of forward and reverse transacylations. Also catalyzes transacylations between other phospholipids such as phosphatidylethanolamine (1,2-diacyl-sn-glycero-3-phosphoethanolamine or PE) and CL, between PC and PE, and between PC and phosphatidate (1,2-diacyl-sn-glycero-3-phosphate or PA), although at lower rate. Not regiospecific, it transfers acyl groups into any of the sn-1 and sn-2 positions of the monolysocardiolipin (MLCL), which is an important prerequisite for uniformity and symmetry in CL acyl distribution. Cannot transacylate dilysocardiolipin (DLCL), thus, the role of MLCL is limited to that of an acyl acceptor. CoA-independent, it can reshuffle molecular species within a single phospholipid class. Redistributes fatty acids between MLCL, CL, and other lipids, which prolongs the half-life of CL. Its action is completely reversible, which allows for cyclic changes, such as fission and fusion or bending and flattening of the membrane. Hence, by contributing to the flexibility of the lipid composition, it plays an important role in the dynamics of mitochondria membranes. Essential for the final stage of spermatogenesis, spermatid individualization. Required for the initiation of mitophagy. This is Tafazzin from Drosophila melanogaster (Fruit fly).